The following is a 1342-amino-acid chain: MVYSYTEKKRIRKDFGKRDQVLDTPYLLSIQLDSFKQFIEADPEGEYGLEAAFRSVFPITSYSGSAELQYVSYRLGEPVFDVKECQIRGVTYSAPLRVKLRMVLYDREAAAGTVKDIKEQEVYMGEIPLMTENGTFVINGTERVIVSQLHRSPGVFFDHDKGKTHSSGKVLYNARVIPYRGSWLDFEFDAKDNLFVRIDRRRKLPASIILRALDFSSEQILATFFETIGFEVKDGKLMMDLVPERLRGETATFDIVANGAVVVETGRRVTARHIRQLEKDSVTQIEVPVEYVVGKVAAKDYAHPQTGEMVVTANQALSLEAVANLSQAGFKHFEVLFTNELDHGAYMSETLRIDSSSSRLEALVEIYRMMRPGEPPTREAAEQLFENLFFSSERYDLSTVGRMKFNRRLAREDETGVGTLTKDDIVDVMKRLIDIRNGNDEVDDIDHLGNRRIRSVGEMAENQFRVGLVRVERAVKERLSLGDLDTLMPQDLINAKPISAAVKEFFGSSQLSQFMDQNNPLSEVTHKRRISALGPGGLTRERAGFEVRDVHPTHYGRLCPIETPEGPNIGLINSLSVYSRTNEYGFLETPYRKVIDGVITDEVDYLSAIEEGKYVIAQANAATTEDGRLKDELIPCRHKGESTFMNADQIQYMDVSPQQIVSVAAALIPFLEHDDANRALMGSNMQRQAVPTLRADKPLVGTGMERAVAVDSGVTVVAKRGGMIDYVDASRIVIKVNEDELLPGEAGIDIYSLTKYTRSNQNTCINQRPCVMLGEPVMAGDVLADGPSTDLGELALGQNLRVAFMPWNGYNFEDSILVNERVVQEDRLTTIHIQELACISRDTKLGPEEITADIPNVGEAALSKLDESGIVYVGAEVKGGDILVGKVTPKGETQLTPEEKLLRAIFGEKASDVKDSSLRVPNGVYGTVVDVQVFTRDGVEKDKRAKEIEEMQLKEAKKDLTEEFKILEDGIFGRSRNLLLAAGYSEDRLNKLDRSKWFELAIEDEAKQIELEQIAEQHVELKAEFDKKFENKRRKIIQGDDLAPGVLKIVKVYLAVKRRIQPGDKMAGRHGNKGVISKICPVEDMPHDEYGRPVDIVLNPLGVPSRMNIGQILEVHLGLAAKGIGEKIDRMVKEQRELHEMRDFLQQVYDLGEKDTQQVNVAELSDDDVRTLVGNLRKGLPVATPVFDGAKEREIKALLKLADLPESGQIALFDGRTGNAFERKVTVGYMYMLKLNHLVDDKMHARSTGSYSLVTQQPLGGKAQFGGQRFGEMEVWALEAYGAAYTLQEMLTVKSDDVNGRTKMYKNIVDGDHRMEPGMPESFNVLLKEIRSLGINIELDEE.

This sequence belongs to the RNA polymerase beta chain family. In terms of assembly, the RNAP catalytic core consists of 2 alpha, 1 beta, 1 beta' and 1 omega subunit. When a sigma factor is associated with the core the holoenzyme is formed, which can initiate transcription.

It catalyses the reaction RNA(n) + a ribonucleoside 5'-triphosphate = RNA(n+1) + diphosphate. Functionally, DNA-dependent RNA polymerase catalyzes the transcription of DNA into RNA using the four ribonucleoside triphosphates as substrates. The polypeptide is DNA-directed RNA polymerase subunit beta (Aeromonas hydrophila subsp. hydrophila (strain ATCC 7966 / DSM 30187 / BCRC 13018 / CCUG 14551 / JCM 1027 / KCTC 2358 / NCIMB 9240 / NCTC 8049)).